Here is a 492-residue protein sequence, read N- to C-terminus: Cysteine--tRNA ligase (492 aa).

Cysteine 29 lines the Zn(2+) pocket. The 'HIGH' region signature appears at 31–41; that stretch reads LTTSDPPHLGH. Residues cysteine 229, histidine 254, and glutamate 258 each contribute to the Zn(2+) site. The short motif at 286–290 is the 'KMSKS' region element; sequence KMSSS.

It belongs to the class-I aminoacyl-tRNA synthetase family. The cofactor is Zn(2+).

Its subcellular location is the cytoplasm. It carries out the reaction tRNA(Cys) + L-cysteine + ATP = L-cysteinyl-tRNA(Cys) + AMP + diphosphate. The polypeptide is Cysteine--tRNA ligase (Haloarcula marismortui (strain ATCC 43049 / DSM 3752 / JCM 8966 / VKM B-1809) (Halobacterium marismortui)).